Consider the following 241-residue polypeptide: Small ribosomal subunit protein uS3 (241 aa).

The region spanning Ile-39 to Lys-107 is the KH type-2 domain. The interval Ala-214 to Glu-241 is disordered. Over residues Glu-215–Arg-226 the composition is skewed to basic and acidic residues.

This sequence belongs to the universal ribosomal protein uS3 family. As to quaternary structure, part of the 30S ribosomal subunit. Forms a tight complex with proteins S10 and S14.

Its function is as follows. Binds the lower part of the 30S subunit head. Binds mRNA in the 70S ribosome, positioning it for translation. The chain is Small ribosomal subunit protein uS3 from Sulfurimonas denitrificans (strain ATCC 33889 / DSM 1251) (Thiomicrospira denitrificans (strain ATCC 33889 / DSM 1251)).